A 160-amino-acid chain; its full sequence is Transcription antitermination protein NusB (160 aa).

It belongs to the NusB family.

Involved in transcription antitermination. Required for transcription of ribosomal RNA (rRNA) genes. Binds specifically to the boxA antiterminator sequence of the ribosomal RNA (rrn) operons. This chain is Transcription antitermination protein NusB, found in Rhizobium meliloti (strain 1021) (Ensifer meliloti).